Reading from the N-terminus, the 483-residue chain is Protein DETOXIFICATION 6 (483 aa).

12 helical membrane passes run 38–58 (ALPM…SVMV), 69–89 (GVAL…FGLA), 113–133 (FSAI…WFYM), 146–166 (ISKV…AQAV), 187–207 (AITT…AFGL), 211–231 (GAAL…ALYV), 263–283 (AAMT…SGLL), 292–312 (VLSI…GIGA), 334–354 (VFAG…LLFI), 376–396 (LSPL…LGGV), 405–425 (IGAW…GLFL), and 436–456 (LWIG…IVTA).

This sequence belongs to the multi antimicrobial extrusion (MATE) (TC 2.A.66.1) family.

The protein resides in the membrane. The polypeptide is Protein DETOXIFICATION 6 (Arabidopsis thaliana (Mouse-ear cress)).